The following is a 139-amino-acid chain: HTH-type transcriptional regulator MntR (139 aa).

In terms of domain architecture, HTH dtxR-type spans 1–63 (MPTPSMEDHI…YEKYRGLTLT (63 aa)). Mn(2+) is bound by residues Asp-8, Glu-11, His-77, Glu-99, Glu-102, and His-103.

It belongs to the DtxR/MntR family. In terms of assembly, homodimer.

It localises to the cytoplasm. DNA binding is strongly activated by Mn(2+). Its function is as follows. Central regulator of manganese homeostasis. This chain is HTH-type transcriptional regulator MntR, found in Lysinibacillus sphaericus (strain C3-41).